We begin with the raw amino-acid sequence, 143 residues long: Flagellar assembly factor FliW (143 aa).

Belongs to the FliW family. In terms of assembly, interacts with translational regulator CsrA and flagellin(s).

The protein resides in the cytoplasm. In terms of biological role, acts as an anti-CsrA protein, binds CsrA and prevents it from repressing translation of its target genes, one of which is flagellin. Binds to flagellin and participates in the assembly of the flagellum. This chain is Flagellar assembly factor FliW, found in Bacillus licheniformis (strain ATCC 14580 / DSM 13 / JCM 2505 / CCUG 7422 / NBRC 12200 / NCIMB 9375 / NCTC 10341 / NRRL NRS-1264 / Gibson 46).